A 463-amino-acid polypeptide reads, in one-letter code: L-seryl-tRNA(Sec) selenium transferase (463 aa).

Lys-295 carries the post-translational modification N6-(pyridoxal phosphate)lysine.

Belongs to the SelA family. As to quaternary structure, homodecamer; pentamer of dimers. Binds only one seryl-tRNA(Sec) per dimer. Requires pyridoxal 5'-phosphate as cofactor.

The protein localises to the cytoplasm. It catalyses the reaction L-seryl-tRNA(Sec) + selenophosphate + H(+) = L-selenocysteinyl-tRNA(Sec) + phosphate. Its pathway is aminoacyl-tRNA biosynthesis; selenocysteinyl-tRNA(Sec) biosynthesis; selenocysteinyl-tRNA(Sec) from L-seryl-tRNA(Sec) (bacterial route): step 1/1. Converts seryl-tRNA(Sec) to selenocysteinyl-tRNA(Sec) required for selenoprotein biosynthesis. In Salmonella dublin (strain CT_02021853), this protein is L-seryl-tRNA(Sec) selenium transferase.